Here is a 371-residue protein sequence, read N- to C-terminus: Transcription factor MYB12 (371 aa).

2 HTH myb-type domains span residues 9–61 (KVGI…INYL) and 62–116 (RSDL…SRKL). 2 DNA-binding regions (H-T-H motif) span residues 37 to 61 (WRSL…INYL) and 89 to 112 (WSLI…NSHL). Residues 136–183 (NASSAPPPPQAKRRLGRTSRSAMKPKIHRTKTRKTKKTSAPPEPNADV) are disordered. Positions 146-172 (AKRRLGRTSRSAMKPKIHRTKTRKTKK) are enriched in basic residues.

In terms of tissue distribution, expressed in stems and flower buds. Expressed in seedlings, roots, cotyledons and apical meristems.

It is found in the nucleus. Flavonol-specific transcription activator involved in the regulation of several genes of flavonoid biosynthesis. Activates the expression of CHS, CHI, F3H and FLS1. Controls flavonol biosynthesis mainly in the root. Confers tolerance to UV-B. This Arabidopsis thaliana (Mouse-ear cress) protein is Transcription factor MYB12.